We begin with the raw amino-acid sequence, 241 residues long: Chaperone protein HifB (241 aa).

Positions 1-27 are cleaved as a signal peptide; sequence MGKTMFKKTLLFFTALFFAALCAFSAN.

This sequence belongs to the periplasmic pilus chaperone family.

It is found in the periplasm. Its function is as follows. Mediates assembly of pili by forming soluble multimeric complexes with pili subunits as an intermediate step in the assembly process. This protein is involved in type B pili (HifA) assembly. The polypeptide is Chaperone protein HifB (hifB) (Haemophilus influenzae).